Reading from the N-terminus, the 801-residue chain is Leucine--tRNA ligase (801 aa).

Residues 40 to 51 (PYPSGAGLHVGH) carry the 'HIGH' region motif. A 'KMSKS' region motif is present at residues 576 to 580 (KMSKS). Position 579 (K579) interacts with ATP.

The protein belongs to the class-I aminoacyl-tRNA synthetase family.

The protein localises to the cytoplasm. It carries out the reaction tRNA(Leu) + L-leucine + ATP = L-leucyl-tRNA(Leu) + AMP + diphosphate. The chain is Leucine--tRNA ligase from Exiguobacterium sibiricum (strain DSM 17290 / CCUG 55495 / CIP 109462 / JCM 13490 / 255-15).